Consider the following 625-residue polypeptide: Autophagy-related protein 13b (625 aa).

Low complexity-rich tracts occupy residues 322–332 (PSVSCSPSPTR) and 455–477 (PSGVRPSSSSSPRISFSRSSSRS). Disordered regions lie at residues 322–388 (PSVS…AVPR), 452–527 (FRRP…YPKK), and 544–564 (PPLRQDVSESSRPEICSNNNK). Over residues 498 to 518 (ITDRNSRPGSFDHRGDIHEPF) the composition is skewed to basic and acidic residues.

This sequence belongs to the ATG13 family. Plant subfamily.

The protein resides in the cytoplasmic vesicle. The protein localises to the autophagosome. In terms of biological role, involved in autophagy in a nutritional condition dependent manner. The ATG1-ATG13 protein kinase complex regulates downstream events required for autophagosome enclosure and/or vacuolar delivery. Becomes a target of autophagy under nutrient starvation. Connects autophagy to plant nutritional status. This chain is Autophagy-related protein 13b, found in Arabidopsis thaliana (Mouse-ear cress).